Here is a 273-residue protein sequence, read N- to C-terminus: Light-independent protochlorophyllide reductase iron-sulfur ATP-binding protein (273 aa).

ATP contacts are provided by residues 12-17 (GIGKST) and lysine 41. Serine 16 contributes to the Mg(2+) binding site. The [4Fe-4S] cluster site is built by cysteine 97 and cysteine 131. 182–183 (NR) contributes to the ATP binding site.

Belongs to the NifH/BchL/ChlL family. Homodimer. Protochlorophyllide reductase is composed of three subunits; BchL, BchN and BchB. It depends on [4Fe-4S] cluster as a cofactor.

The enzyme catalyses chlorophyllide a + oxidized 2[4Fe-4S]-[ferredoxin] + 2 ADP + 2 phosphate = protochlorophyllide a + reduced 2[4Fe-4S]-[ferredoxin] + 2 ATP + 2 H2O. Its pathway is porphyrin-containing compound metabolism; bacteriochlorophyll biosynthesis (light-independent). In terms of biological role, component of the dark-operative protochlorophyllide reductase (DPOR) that uses Mg-ATP and reduced ferredoxin to reduce ring D of protochlorophyllide (Pchlide) to form chlorophyllide a (Chlide). This reaction is light-independent. The L component serves as a unique electron donor to the NB-component of the complex, and binds Mg-ATP. This Chloroflexus aurantiacus (strain ATCC 29364 / DSM 637 / Y-400-fl) protein is Light-independent protochlorophyllide reductase iron-sulfur ATP-binding protein.